The primary structure comprises 337 residues: Mitochondrial glutathione transporter SLC25A40 (337 aa).

Solcar repeat units lie at residues 14–132 (VTPL…LSTF), 140–224 (NETR…LRRW), and 234–328 (STFM…GKGF). 6 helical membrane-spanning segments follow: residues 20–40 (MMAS…LDVV), 104–124 (LWSG…IYFT), 146–166 (IVAG…LELI), 200–221 (WAPT…YENL), 240–260 (FTAG…FDVV), and 299–319 (GLFT…AIMI).

It belongs to the mitochondrial carrier (TC 2.A.29) family. As to expression, widely expressed at low level.

The protein resides in the mitochondrion inner membrane. The catalysed reaction is glutathione(in) = glutathione(out). Its function is as follows. Probable mitochondrial transporter required for glutathione import into mitochondria. Glutathione, which plays key roles in oxidative metabolism, is produced exclusively in the cytosol and is imported in many organelles. Mitochondrial glutathione is required for the activity and stability of proteins containing iron-sulfur clusters, as well as erythropoiesis. This chain is Mitochondrial glutathione transporter SLC25A40, found in Rattus norvegicus (Rat).